A 113-amino-acid chain; its full sequence is Nitrogenase vanadium-iron protein delta chain (113 aa).

Hexamer of two alpha, two beta, and two delta chains. The cofactor is iron-sulfur cluster. Vanadium cation is required as a cofactor.

The enzyme catalyses N2 + 8 reduced [2Fe-2S]-[ferredoxin] + 16 ATP + 16 H2O = H2 + 8 oxidized [2Fe-2S]-[ferredoxin] + 2 NH4(+) + 16 ADP + 16 phosphate + 6 H(+). The key enzymatic reactions in nitrogen fixation are catalyzed by the nitrogenase complex, which has 2 components: the iron protein (component 2) and a component 1 which is either a molybdenum-iron protein, a vanadium-iron, or an iron-iron protein. The protein is Nitrogenase vanadium-iron protein delta chain (vnfG) of Azotobacter salinestris.